A 172-amino-acid polypeptide reads, in one-letter code: Large ribosomal subunit protein uL10 (172 aa).

It belongs to the universal ribosomal protein uL10 family. Part of the ribosomal stalk of the 50S ribosomal subunit. The N-terminus interacts with L11 and the large rRNA to form the base of the stalk. The C-terminus forms an elongated spine to which L12 dimers bind in a sequential fashion forming a multimeric L10(L12)X complex.

In terms of biological role, forms part of the ribosomal stalk, playing a central role in the interaction of the ribosome with GTP-bound translation factors. In Acidothermus cellulolyticus (strain ATCC 43068 / DSM 8971 / 11B), this protein is Large ribosomal subunit protein uL10.